A 5162-amino-acid polypeptide reads, in one-letter code: MSRKKVDNIYPLTPMQEGMLFHSLLDEGSESYFEQMRFTIKGLIDPAILEQSLNALIERHDILRTVFLLEKVQKPRQIVLRERKTKVQVLDITHLSEGEQAAYLEDFAQKDRQASFDLAKDVLIRLTLVRTSADTHTLFWSHHHILLDGWCIPIVLNDFFQIYQQRKGGLPVELGPVYPYSTYISWLGEQDAEEAKASWAEYISGYEPTSFIHKQGGKNSYRQAELVFAIEQGLTDSLNKLAKQLHVTLNNLFRAIWGLMLQRQCNTEDVVFGSVVSGRPSHLPNVEQMVGLFINTVPIRVQAGAEQTFSELVKQVQQEALSLAKYHYLSLADIQGNQQLIDHILLFQNYPMGQQFLTRLNQYNEEFTLTHLSAFEQTNYDLNVMVTPSDVITIKYIYNAAVFSEEQLLHISRQLTTIMTQVTNAPDILLQKLEVVDPAEKQLQLHSFNDTYRHYPTDKLIHQIFEERAEREPERIALVMGEQVLTYRELNEKANQLAKLLRARGIGPESMVSLLTERSAEMMIAILAIFKAGGAYLPIDPSHPKERIEYILQDSRSELLLVNHRFLGAVDFADRIIDLEAAEIYQGAADNLECVSHANHLAYVIYTSGSTGKPKGVMIEHASLLNIIFALQELYPLLENDAYLLKTTYTFDVSVAEIFGWILGSGRLVILDPGAEKEPAHIWETMVNHGVTHVNFVPSMLIPFVDYVRDQQQESPLRYIFAAGEAMPSELVGKVYEALPGVILENIYGPTESTIYATKYSLAKDSQDVLVPIGKPLANIQTHIVNKHGQLQPVGVPGELCIAGASLARGYWNNEALTNEKFVPHPFAAGQRMYRTGDLARYRQDGNIEYLGRIDHQVKIRGYRIELDEIRAQLIQEASIRDAVVIARTDHNGQAYLCAYFIADKQWTVNALREALRQTLPDYMVPSHFIQMEEFPLTSSGKIDRKALPLPDGRVHTGNVYLAPRNPVEELVVRIWEEVLNVSQVGVHDNFFELGGHSLLATQVLSRTAKLFHVRLPMREIFTHQTVAELARRIQALRHGAEADKHSPIQPSALQRADELPLSYAQQRLWFLDRLIPDSAMYNIPVGFRLRGTVDELVLERALNEIIQRHESLRTTFVDVDGRALQVIHTDVHLSLGVTDLRDKPAAAKDAEWKQMAEEDAATPFRLDQWPLLRAMLIRLEEQESVLWLNVHHIISDGWSMDVLVNELSEVYETLLKGEALPLAALPIQYRDYAVWQREKSQDDVWKEQLRYWKNKLDGSEPLLPLPTDRPRAVVQSYRGDHLSFYVPGEVGQKLRELGRQEGATLFMTLLAAFKSFLYRYTHANDILIGTPVAGRNRQEIENLIGFFVNMLVLRTDLSDDPTFVELLRRVRETAFDAFANEDVPFEKLVDELQIERSLSYSPLFQVLFAVQGMSTGVREGETLAIAPDEVTLNQTTKFDLTLTMIEAADNGLKGVFEYSTDLFDRTTIERMAEHFGNLLQAIAADPGQKIVELPLLGGAEQSRMLVEWNQTDVAYSLDLLVHERVARIAQELPEQFAVIGEQGALTYAQLDAKANQLAHALLKRGIGSEDLVGICVERSSEMQIGQLAILKAGAAYVPMDPAYPRERLAFMIKDAGMSLVLTQERLLDALPQEAAALLCLDRDWQEIAAESTAAPAIKTNADQLAYVIYTSGSTGTPKGVEIEHGSLLNLVNWHQRAYSVSAEDRASQIAGTAFDASVWETWPYLTAGATICQPREEIRLSPEKLRDWLVETGITISFLPTPLAENLLPLPWPTGAALRYMLTGGDTLHQYPTADVPFTLVNQYGPTENTVVATAGAVPVLGERESAPTIGRPIDNVSVYVLDENRQPVPVGVVGELYIGGKSLARGYRNRPDLTEASFVPNPFSPIEGARMYRTGDLVRYAADGSIEFIGRADDQVSIRGFRVELGEIESALYAHPAVAESVVIVREDVTPGVKRLVAYAVLHEGEERQTSELRQSLKEMLPDYMVPSAIVLMEALPLTPNGKVDRRALPLPDVAQTEWEGSFVEPQSDVERKLAEIWQEVLGVETIGVHDNFFELGGDSILTIQIVSRANQAGLQLTPKHLFDAQTLAELAASAVVLEKAPEMQAEQGIVTGELPLTPIQTWFFEQDVRHVHHWNQSVMLAVREELDMTALTQAFAALPRQHDALRLRFQQVNGTWQAAHGEIADEDVLLVADLSSVPEAEREARMRHITDELQASLDIEKGPLHRAAYFQLGAEQRLFIVIHHLVVDGVSWRIILEDLQTAYEQVKAGQKIAWPQKTTSFKSWAEELTTYAEQSAVDEYWTGMDSEQACGLPVDHPQGKNTEGLAVQVKAKLSADETRALLQEVPAAYRTQINDVLLSALTRTITDWTNKRALYVSVEGHGREPIVDGVDVSRTVGWFTSLYPVLLETEPDLAWGDLLKSIKEQVRAIPDKGIGYGIHRYLSRDGQTAEMLRAKPQPEISFNYLGQFGQGQTTDAALFQIIPNWSASNVSEDETRLYKLDVMSMVAQDQLEMSWTFSRDLYEPGTIEKLAHDYVQALRAIIAHCRTEQAGGYTPSDFPLAELDQNSLDKFIGHNRLIENVYTLTPLQEGMLFHSLYEQAGGDYVVQLALKLEHVNVEAFSAAWQKVVERHAILRTSFLWSGLEKPHQVVHAKVKTFVERLDWRHLTAAEQEAGLQTYLEQDRKRGFDLARPPLMRWTLIRLDASTFQFVWSFHHMLLDGWSTPIVFQDWQAFYAAASHGKEASLPAIPPFSAYIAWLKRQNLEEAQQYWRDYLQGFGVPTPLGMGKSGGSAGQPKEYADHKLLLSERATANLLAFARKHQLTLNTVVQGAWALILARYAGEAEVVFGTTNLGRPTDLPDAEAMVGLFINTLPVRVLFPEQTTVIDWLQSLQQAQSEMRQYEFTPLVDIQSWSEVPRGQSLFDSIFVFENYLSGTSVDSESGMLLGEVKAVEQTSYPLTLVVAPGEELMLKLIYETGRFEQPAMDKVLAQLSSVLEAIMREPHEQLADLSIITEAERHKLLVEWNATDMPYERNLVMHQLFEAQVEATPDAQALVVGTERLTYAELNKRANQLAHYLRAQGVGPEVLVAVLMERTTEMIVALLGIIKAGGAYVPIDPAYPQDRIGYTLDDSQAAIVLTQERLLPMLPEHTAQVICLDRDWACMAVQPEANVPNLAAPTNLSYVIYTSGSTGLPKGVAIQHSSVIAFIFWAKTVFSAEEMSGVLASTSICFDLSVYEIFVTLSCGGKVILADNALHLPSLPAAKEVTLINTVPSAAKELVRMNAIPPSVRVVNLAGEPLPNTLAQSLYALGHVQKVFNLYGPSEDTTYSTYVQVTKGAKTEPTIGRPLANTQAYVLDAKLQPVPLGLPGELYLGGDGLARGYLKRPKMTAERFLPNPFHPDPDARMYSTGDLVRYLPDGQLEYLGRIDHQVKIRGYRIELGELEAVLRSHPQIKEAVVVAKEDKLGEKRLVAYITTKDGECGDRAVLTSWAKAKLPEFMVPSFFVWLDAMPLTPNGKIDRKQLPEPEWGQVASAAGYVAPRNQTEVLVASIWADVLGIEQVGVHDNFFELGGHSLLATRVASRLRETFAKEVPIRAIFERPTVAELSETLGAIGQNETEAQMLPVSREAHLPLSFAQQRLWFLDRLMPDSTLYNIPSAVRLLGDLDIAAWEKSLQVLIQRHESLRTTFGDVDGEAVQVIHSRLDGKLNVIDLRGMPADEREAEAHRLAGLEAATPFDLSQGPLLRTTLIRLAEQECVFLFNLHHIIFDGWSIGIFLKEMRALYEAFVREEAPELAEITVQYADYAVWQRKWLEGEVLAEQLAYWKEKLSGAEPLLALPTDQPRPAVQTHDGAMHTIKLSGELYAKLNKLSQEEGATLFMTLLAAFQVLLYRYSGQEDILVGSPVAGRNRQETEPLIGFFINTLVLRTDLSGEPTFRELLARVRETAFEAYAHQDLPFEKLVDELELERSLSYSPLFQVMFVLQNFQLNLDEKAGIRVADFEMDKHLVTSKYDLTLTMAEKQNGLFATFEYNTALFHEATMERLSQHFIQLLEAIVHMPDQGIARLPLLNQSERAQLLVEWNDTTTAYPRNKRVDQLFRETALLYPERLAVVAGNQTLTYAELERRANQTANYLQQKGVRPGALVGLCVKRSLEMLIGMLGILKAGGAYVPLDPDYPEERLAYMMGDAGITVLLTQEQLMPGLPSGERTTIALDRDWPLIAKESEQAPDVDTTAESLAYVIYTSGSTGLPKGTLVVHRGIVRLVKETDYVTITEQDVFLQASTVSFDAATFEIWGSLLNGAKLVLLPPELPSLAEIGQAIQSHHVTTLWLTAGLFTLMVDHHKEYLSGVRQLLVGGDIVSVPHVKKALEIAGLTVINGYGPTENTTFTCCNPVTVMPESAHTFPIGRPIKNTTAYVLDRHMQPVPIGVTGELYIGGDGLAEGYLNRPDLTAERFVPNPFATDQAARLYRTGDLVRYLPDGLIEFIGRLDNQVKIRGFRIELSEVEAVLAKHPAITASVVIVHENEAGMKQLVAYAVKDAEQELGTAELRQHFKAHVPDYMVPAAFVMLDALPLTPNGKVDRKALPAPVLERSREEDAFAAATSHVEQTLADIWCAVLRMDRIGIHDNFFELGGDSILSIQIVARANKAGIHLTPKQLFDQQTIAELAKVAGQSTKVDAEQGNVTGEVPLLPIQTWFFEQKQPTPHHWNQSMLLQVNEPLEEECLSQAVAQLLAHHDALRLRYTFADGQWKQTYADVDSEVPLQVEDLSMSPPAQQARKIEKLAQQAQASLDLQNGPLLKVVYFDLGYDRPGRLLMVIHHLAVDGVSWRILIEDLQTAYGQAEKGNKIQLPPKTTSYKAWAEKLHKYASSERMLVDQDYWLKAADELSGHPLPVHDWAENTEANGRMWTIHLEEEETDALLQKVPSRYRVQINDILLTALALAYGKWTGESALLVNLEGHGREELFEDVDLSRTVGWFTSMYPLLIQLEPNTSSEDALARVKEKLQQIPHKGLGYGLLRYMAQDPELVEKLKAIPQAPLSFNYLGQFHQAADAKALLAYAEGERGANSGPDNRRTHLIDVVGAVTEGKLGLSFLYNGRLYSESHIETFARHYTDALQSLIQAEKQSYRAEDFEDADLSQSALNKVLARLKNRKGNELHGGSH.

Carrier domains lie at 963–1038, 2027–2101, 3541–3616, and 4601–4675; these read APRN…QALR, EPQS…VVLE, APRN…GAIG, and AATS…GQST. 4 positions are modified to O-(pantetheine 4'-phosphoryl)serine: serine 998, serine 2062, serine 3576, and serine 4636.

This sequence belongs to the ATP-dependent AMP-binding enzyme family. As to quaternary structure, large multienzyme complex composed of 4 subunits; LgrA, LgrB, LgrC and LgrD. Pantetheine 4'-phosphate is required as a cofactor.

Functionally, activates the 3rd to 6th amino acids (Ala, D-Leu, Ala and D-Val) in linear gramicidin and catalyzes the formation of the peptide bond between them. This enzyme is also responsible for the epimerization of the 4th (D-Leu) and the 6th (D-Val) amino acids. This is Linear gramicidin synthase subunit B (lgrB) from Brevibacillus parabrevis.